The following is a 557-amino-acid chain: Putative glutathione-regulated potassium-efflux system protein KefB (557 aa).

10 helical membrane-spanning segments follow: residues 2–22 (LGYL…ISDV), 24–44 (EILH…GLEL), 56–76 (IFGV…GLLM), 84–104 (AAVV…LQLM), 121–141 (VLLF…LLAG), 146–166 (HFDW…LIGG), 176–196 (FIAA…LVLG), 199–219 (LFMD…GVLL), 237–257 (GLLL…GVLY), and 260–280 (LLWV…VLYL). The region spanning 356–475 (KPQVIVVGFG…AGVTQFSRET (120 aa)) is the RCK N-terminal domain.

Belongs to the monovalent cation:proton antiporter 2 (CPA2) transporter (TC 2.A.37) family. KefB subfamily. As to quaternary structure, interacts with the regulatory subunit KefG.

It localises to the cell inner membrane. Functionally, pore-forming subunit of a potassium efflux system that confers protection against electrophiles. Catalyzes K(+)/H(+) antiport. This Shigella flexneri protein is Putative glutathione-regulated potassium-efflux system protein KefB.